The chain runs to 23 residues: Acidic phospholipase A2 CTs-A1 (23 aa).

Ca(2+) is required as a cofactor. Post-translationally, contains 7 disulfide bonds. In terms of tissue distribution, expressed by the venom gland.

It is found in the secreted. The enzyme catalyses a 1,2-diacyl-sn-glycero-3-phosphocholine + H2O = a 1-acyl-sn-glycero-3-phosphocholine + a fatty acid + H(+). Its function is as follows. Snake venom phospholipase A2 (PLA2) that shows a moderate inhibition of ADP-induced human platelet aggregation when tested on platelet rich plasma. Exhibits moderate hydrolytic activities and prefers the anionic micelles (dPPC with deoxycholate) to the zwitterionic micelles (dPPC with Triton X-100). PLA2 catalyzes the calcium-dependent hydrolysis of the 2-acyl groups in 3-sn-phosphoglycerides. This Trimeresurus stejnegeri (Chinese green tree viper) protein is Acidic phospholipase A2 CTs-A1.